The primary structure comprises 275 residues: Large ribosomal subunit protein uL2 (275 aa).

A disordered region spans residues 208 to 275 (AGAKRWRGRR…NMIIRDRRKK (68 aa)). 2 stretches are compositionally biased toward basic residues: residues 209–219 (GAKRWRGRRPT) and 254–263 (KGYKTRRNKR).

The protein belongs to the universal ribosomal protein uL2 family. As to quaternary structure, part of the 50S ribosomal subunit. Forms a bridge to the 30S subunit in the 70S ribosome.

One of the primary rRNA binding proteins. Required for association of the 30S and 50S subunits to form the 70S ribosome, for tRNA binding and peptide bond formation. It has been suggested to have peptidyltransferase activity; this is somewhat controversial. Makes several contacts with the 16S rRNA in the 70S ribosome. The protein is Large ribosomal subunit protein uL2 of Coxiella burnetii (strain CbuG_Q212) (Coxiella burnetii (strain Q212)).